The chain runs to 303 residues: MGHRWLTDHSWNRPSWTVADLEAAKAGRTVSVVLPALNEEETVGSVVETIKPLLGGLVDELIVLDSGSTDETEIRAVAAGAKVVSREAALPEVPPQPGKGEVLWRSLAATTGDIIAFVDSDLIDPDPMFVPKLLGPLLTCDGVHLVKGFYRRPLKVSGAEDANGGGRVTELVARPLLASLRPELNCVLQPLGGEYAGTRELLTSVPFAPGYGVEIGLLVDTYDRLGLDGIAQVNLGVRAHRNRPLTELASMSRQVIATLLSRCGISDSGVGLTQFFADGDDFTPRVSSVSLADRPPMTTLRPR.

UDP-alpha-D-glucose is bound by residues 35–39, serine 66, lysine 99, and 119–120; these read PALNE and DS. Aspartate 121 lines the Mn(2+) pocket. Residue 166–169 coordinates (2R)-3-phosphoglycerate; that stretch reads GRVT. UDP-alpha-D-glucose-binding positions include 211-214 and 238-243; these read YGVE and RAHRNR. Histidine 240 is a binding site for Mn(2+). A (2R)-3-phosphoglycerate-binding site is contributed by asparagine 242.

It belongs to the glycosyltransferase 2 family. As to quaternary structure, homotrimer. The cofactor is Mg(2+). It depends on Mn(2+) as a cofactor.

It catalyses the reaction an NDP-alpha-D-glucose + (2R)-3-phosphoglycerate = (2R)-2-O-(alpha-D-glucopyranosyl)-3-phospho-glycerate + a ribonucleoside 5'-diphosphate + H(+). The catalysed reaction is (2R)-3-phosphoglycerate + UDP-alpha-D-glucose = (2R)-2-O-(alpha-D-glucopyranosyl)-3-phospho-glycerate + UDP + H(+). The enzyme catalyses ADP-alpha-D-glucose + (2R)-3-phosphoglycerate = (2R)-2-O-(alpha-D-glucopyranosyl)-3-phospho-glycerate + ADP + H(+). It carries out the reaction GDP-D-glucose + (2R)-3-phosphoglycerate = (2R)-2-O-(alpha-D-glucopyranosyl)-3-phospho-glycerate + GDP + H(+). Involved in the biosynthesis of 6-O-methylglucose lipopolysaccarides (MGLPs). Catalyzes the transfer of the glucose moiety from a nuleotide sugar such as UDP-alpha-D-glucose to the position 2 of 3-phospho-D-glycerate (3-PGA) to form glucosyl-3-phosphoglycerate (GPG). It can use UDP-glucose, ADP-glucose and GDP-glucose as sugar donor substrates with decreasing affinity and with 3-PGA as an acceptor. D-glycerate can only be an acceptor with ADP-glucose and at a very low rate. The protein is Glucosyl-3-phosphoglycerate synthase (gpgS) of Mycolicibacterium smegmatis (strain ATCC 700084 / mc(2)155) (Mycobacterium smegmatis).